The sequence spans 442 residues: Dol-P-Man:Man(5)GlcNAc(2)-PP-Dol alpha-1,3-mannosyltransferase (442 aa).

The Lumenal segment spans residues 1–34 (MAAPSSRPESNPPLYKQALDFALDVANGRHALSK). A helical membrane pass occupies residues 35-55 (LIPPALFLVDALLCGLIIWKV). Over 56–84 (PYTEIDWAAYMEQVSQILSGERDYTKVRG) the chain is Cytoplasmic. A helical membrane pass occupies residues 85 to 105 (GTGPLVYPAAHVYIYTGLYHL). Residues 106–111 (TDEGRN) are Lumenal-facing. A helical membrane pass occupies residues 112 to 132 (ILLAQQLFAGLYMVTLAVVMG). At 133-155 (CYWQAKAPPYLFPLLTLSKRLHS) the chain is on the cytoplasmic side. The chain crosses the membrane as a helical span at residues 156–176 (IFVLRCFNDCFAVLFLWLAIF). The Lumenal segment spans residues 177-198 (FFQRRNWQAGALLYTLGLGVKM). Residues 199 to 219 (TLLLSLPAVGIVLFLGSGSFV) form a helical membrane-spanning segment. Thr-220 is a topological domain (cytoplasmic). The chain crosses the membrane as a helical span at residues 221–241 (TLQLVATMGLVQILIGVPFLA). Residues 242 to 272 (HYPTEYLSRAFELSRQFFFKWTVNWRFVGEE) are Lumenal-facing. A helical transmembrane segment spans residues 273 to 293 (IFLSKGFALTLLALHVLVLGI). The Cytoplasmic segment spans residues 294-333 (FITTRWIKPARKSLVQLISPVLLAGKPPLTVPEHRAAARD). The helical transmembrane segment at 334–354 (VTPRYIMTTILSANAVGLLFA) threads the bilayer. The Lumenal portion of the chain corresponds to 355–376 (RSLHYQFYAYVAWSTPFLLWRA). The chain crosses the membrane as a helical span at residues 377–397 (GLHPVLVYLLWAVHEWAWNVF). The Cytoplasmic portion of the chain corresponds to 398–401 (PSTP). Residues 402-422 (ASSAVVVGVLGVTVAGVWFGA) form a helical membrane-spanning segment. Residues 423 to 442 (REEWEPGMKSSSKKEEAAMR) are Lumenal-facing.

It belongs to the glycosyltransferase ALG3 family.

It is found in the endoplasmic reticulum membrane. It carries out the reaction an alpha-D-Man-(1-&gt;2)-alpha-D-Man-(1-&gt;2)-alpha-D-Man-(1-&gt;3)-[alpha-D-Man-(1-&gt;6)]-beta-D-Man-(1-&gt;4)-beta-D-GlcNAc-(1-&gt;4)-alpha-D-GlcNAc-diphospho-di-trans,poly-cis-dolichol + a di-trans,poly-cis-dolichyl beta-D-mannosyl phosphate = an alpha-D-Man-(1-&gt;2)-alpha-D-Man-(1-&gt;2)-alpha-D-Man-(1-&gt;3)-[alpha-D-Man-(1-&gt;3)-alpha-D-Man-(1-&gt;6)]-beta-D-Man-(1-&gt;4)-beta-D-GlcNAc-(1-&gt;4)-alpha-D-GlcNAc-diphospho-di-trans,poly-cis-dolichol + a di-trans,poly-cis-dolichyl phosphate + H(+). Its pathway is protein modification; protein glycosylation. Dol-P-Man:Man(5)GlcNAc(2)-PP-Dol alpha-1,3-mannosyltransferase that operates in the biosynthetic pathway of dolichol-linked oligosaccharides, the glycan precursors employed in protein asparagine (N)-glycosylation. The assembly of dolichol-linked oligosaccharides begins on the cytosolic side of the endoplasmic reticulum membrane and finishes in its lumen. The sequential addition of sugars to dolichol pyrophosphate produces dolichol-linked oligosaccharides containing fourteen sugars, including two GlcNAcs, nine mannoses and three glucoses. Once assembled, the oligosaccharide is transferred from the lipid to nascent proteins by oligosaccharyltransferases. In the lumen of the endoplasmic reticulum, adds the first dolichyl beta-D-mannosyl phosphate derived mannose in an alpha-1,3 linkage to Man(5)GlcNAc(2)-PP-dolichol to produce Man(6)GlcNAc(2)-PP-dolichol. The polypeptide is Dol-P-Man:Man(5)GlcNAc(2)-PP-Dol alpha-1,3-mannosyltransferase (alg-3) (Neurospora crassa (strain ATCC 24698 / 74-OR23-1A / CBS 708.71 / DSM 1257 / FGSC 987)).